Here is a 245-residue protein sequence, read N- to C-terminus: Complement C1q subcomponent subunit A (245 aa).

Residues 1–22 (METSQGWLVACVLTMTLVWTVA) form the signal peptide. Residues 28 to 114 (APNGKDGAPG…NPGNIRDQPR (87 aa)) form a disordered region. The Collagen-like domain maps to 31–109 (GKDGAPGNPG…KGVKGNPGNI (79 aa)). Pro39 and Pro45 each carry 4-hydroxyproline. At Lys48 the chain carries 5-hydroxylysine. O-linked (Gal...) hydroxylysine; alternate glycosylation is present at Lys48. Residue Pro54 is modified to 4-hydroxyproline. The residue at position 67 (Lys67) is a 5-hydroxylysine. O-linked (Gal...) hydroxylysine; alternate glycosylation is present at Lys67. Residues Pro79 and Pro85 each carry the 4-hydroxyproline modification. Over residues 79–99 (PGNVGLPGPSGPLGDSGPQGL) the composition is skewed to low complexity. The residue at position 100 (Lys100) is a 5-hydroxylysine. A glycan (O-linked (Gal...) hydroxylysine; alternate) is linked at Lys100. The C1q domain occupies 110–245 (RDQPRPAFSA…FSGFLIFPSA (136 aa)). Asn146 is a glycosylation site (N-linked (GlcNAc...) asparagine). Residue Gln199 coordinates Ca(2+).

In terms of assembly, core component of the complement C1 complex, a calcium-dependent complex composed of 1 molecule of the C1Q subcomplex, 2 molecules of C1R and 2 molecules of C1S. The C1Q subcomplex is composed 18 subunits: 3 chains of C1QA, C1QB, and C1QC trimerize to form 6 collagen-like triple helices connected to six globular ligand-recognition modules (C1q domain). Interacts with CR1 (via Sushi 24 and Sushi 25 domains). Interacts (via C-terminus) with CD33; this interaction activates CD33 inhibitory motifs. In terms of processing, O-linked glycans are assumed to be the Glc-Gal disaccharides typically found as secondary modifications of hydroxylated lysines in collagen-like domains.

The protein resides in the secreted. It localises to the cell surface. With respect to regulation, the C1Q subcomplex is inhibited by sulfated molecules, such as triterpenoid sulfates, heparan sulfate, or chondroitin sulfates. In terms of biological role, core component of the complement C1 complex, a multiprotein complex that initiates the classical pathway of the complement system, a cascade of proteins that leads to phagocytosis and breakdown of pathogens and signaling that strengthens the adaptive immune system. The classical complement pathway is initiated by the C1Q subcomplex of the C1 complex, which specifically binds IgG or IgM immunoglobulins complexed with antigens, forming antigen-antibody complexes on the surface of pathogens: C1QA, together with C1QB and C1QC, specifically recognizes and binds the Fc regions of IgG or IgM via its C1q domain. Immunoglobulin-binding activates the proenzyme C1R, which cleaves C1S, initiating the proteolytic cascade of the complement system. The C1Q subcomplex is activated by a hexamer of IgG complexed with antigens, while it is activated by a pentameric IgM. The C1Q subcomplex also recognizes and binds phosphatidylserine exposed on the surface of cells undergoing programmed cell death, possibly promoting activation of the complement system. In Mus musculus (Mouse), this protein is Complement C1q subcomponent subunit A.